We begin with the raw amino-acid sequence, 121 residues long: Small ribosomal subunit protein uS13 (121 aa).

Residues R93 to K121 are disordered.

This sequence belongs to the universal ribosomal protein uS13 family. Part of the 30S ribosomal subunit. Forms a loose heterodimer with protein S19. Forms two bridges to the 50S subunit in the 70S ribosome.

Located at the top of the head of the 30S subunit, it contacts several helices of the 16S rRNA. In the 70S ribosome it contacts the 23S rRNA (bridge B1a) and protein L5 of the 50S subunit (bridge B1b), connecting the 2 subunits; these bridges are implicated in subunit movement. Contacts the tRNAs in the A and P-sites. The sequence is that of Small ribosomal subunit protein uS13 from Paracidovorax citrulli (strain AAC00-1) (Acidovorax citrulli).